The chain runs to 554 residues: Dihydroxy-acid dehydratase (554 aa).

Asp78 is a Mg(2+) binding site. Cys119 contributes to the [2Fe-2S] cluster binding site. Residues Asp120 and Lys121 each coordinate Mg(2+). Position 121 is an N6-carboxylysine (Lys121). Cys191 serves as a coordination point for [2Fe-2S] cluster. Glu442 is a Mg(2+) binding site. The active-site Proton acceptor is Ser468.

This sequence belongs to the IlvD/Edd family. In terms of assembly, homodimer. [2Fe-2S] cluster is required as a cofactor. The cofactor is Mg(2+).

It carries out the reaction (2R)-2,3-dihydroxy-3-methylbutanoate = 3-methyl-2-oxobutanoate + H2O. It catalyses the reaction (2R,3R)-2,3-dihydroxy-3-methylpentanoate = (S)-3-methyl-2-oxopentanoate + H2O. The protein operates within amino-acid biosynthesis; L-isoleucine biosynthesis; L-isoleucine from 2-oxobutanoate: step 3/4. It participates in amino-acid biosynthesis; L-valine biosynthesis; L-valine from pyruvate: step 3/4. Functions in the biosynthesis of branched-chain amino acids. Catalyzes the dehydration of (2R,3R)-2,3-dihydroxy-3-methylpentanoate (2,3-dihydroxy-3-methylvalerate) into 2-oxo-3-methylpentanoate (2-oxo-3-methylvalerate) and of (2R)-2,3-dihydroxy-3-methylbutanoate (2,3-dihydroxyisovalerate) into 2-oxo-3-methylbutanoate (2-oxoisovalerate), the penultimate precursor to L-isoleucine and L-valine, respectively. This Hydrogenobaculum sp. (strain Y04AAS1) protein is Dihydroxy-acid dehydratase.